Reading from the N-terminus, the 461-residue chain is CASP-like protein 4U1 (461 aa).

The tract at residues 1–239 (MASTPRTPAP…RAAETKLPLS (239 aa)) is disordered. Residues 1 to 314 (MASTPRTPAP…AAVAVGERRE (314 aa)) are Cytoplasmic-facing. The segment covering 7 to 69 (TPAPVRSPPP…PLETPPPPSP (63 aa)) has biased composition (pro residues). Composition is skewed to low complexity over residues 116–126 (LSPMRLAAPRL) and 135–155 (TPTG…AAAG). Positions 193-204 (SPSPSPTPPSPL) are enriched in pro residues. Residues 205–221 (TPAAAPVVNNNSNNKNN) show a composition bias toward low complexity. A helical transmembrane segment spans residues 315–335 (LSVTLRLATAVLSLAAFSVIA). The Extracellular segment spans residues 336 to 354 (SARTSGWAGDYYAHHLQYR). The chain crosses the membrane as a helical span at residues 355–375 (YAVAVNVIVCAYSIAQSFGEI). Topologically, residues 376 to 392 (RRLISPRFIFRSMSSYY) are cytoplasmic. Residues 393–413 (CSLFLDQALAYLLMSASSAAA) form a helical membrane-spanning segment. The Extracellular segment spans residues 414–431 (SRNDLWVSRFGTDAFNRK). A helical membrane pass occupies residues 432–452 (ITSALWLSFIAFLMLALNALI). Over 453-461 (STANLFSML) the chain is Cytoplasmic.

This sequence belongs to the Casparian strip membrane proteins (CASP) family. In terms of assembly, homodimer and heterodimers.

Its subcellular location is the cell membrane. This is CASP-like protein 4U1 from Sorghum bicolor (Sorghum).